The following is a 210-amino-acid chain: Chaperone protein TorD (210 aa).

Belongs to the TorD/DmsD family. TorD subfamily.

The protein localises to the cytoplasm. Its function is as follows. Involved in the biogenesis of TorA. Acts on TorA before the insertion of the molybdenum cofactor and, as a result, probably favors a conformation of the apoenzyme that is competent for acquiring the cofactor. This is Chaperone protein TorD from Salmonella arizonae (strain ATCC BAA-731 / CDC346-86 / RSK2980).